The chain runs to 244 residues: Robin (244 aa).

This is Robin from Acanthamoeba polyphaga (Amoeba).